A 624-amino-acid polypeptide reads, in one-letter code: MTEADSSATPLARGVEVIAQVVATLPLSPGVYRMLSGKGDVLYVGKAKSLKKRVVAYTRPDRMPLRIQRMIAETASMEVVTTRTEVEALLLESNLIKSLGPRYNILLKDDKTFPHILITADHDWPQVLKHRGARNRKGEYFGPFASAGAVNQTLAALQRAFLLRSCSDSVFASRTRPCLLFQIKRCSAPCVERIDRDEYLALVEEARAFLSGQSRRVQHDLTARMESAAEAMEYEAAAVFRDRIRALTRIQAHQDINPAEVEEADVVALHQAGDGVCIQVFFFRSGCNYGNRAYFPVHAQGEEAPQIMAAFLGQFYADKTPPREILLSLEPDEVAIVAQALSEKAGRKVTLSVPKRGDRKRLVEHAHDNARDALGRRMAESGAQRKLLEGVAELFGMESAPERIEVYDNSHIQGSDAVGAMIVAGPDGLMKSAYRKFNIRSTDLTPGDDFGMMREVLTRRFARAQKEDPDRDRGLWPDLALIDGGRGQLNAALGVLAELGIDDVMLVGIAKGPDRNAGRERFFLAGKEPISLESRHPVLYFLQRLRDEAHRFAIGTHRARRSKGLVQSTLDALPGIGPKRKKALLHHFGSARAVAEAGLPDLESVEGISHAMAKKIHDYFHPEG.

In terms of domain architecture, GIY-YIG spans 27–105; sequence LSPGVYRMLS…IKSLGPRYNI (79 aa). A UVR domain is found at 215-250; the sequence is RRVQHDLTARMESAAEAMEYEAAAVFRDRIRALTRI.

This sequence belongs to the UvrC family. In terms of assembly, interacts with UvrB in an incision complex.

The protein resides in the cytoplasm. In terms of biological role, the UvrABC repair system catalyzes the recognition and processing of DNA lesions. UvrC both incises the 5' and 3' sides of the lesion. The N-terminal half is responsible for the 3' incision and the C-terminal half is responsible for the 5' incision. The protein is UvrABC system protein C of Paramagnetospirillum magneticum (strain ATCC 700264 / AMB-1) (Magnetospirillum magneticum).